The sequence spans 115 residues: Phosphoribosyl-AMP cyclohydrolase (115 aa).

Aspartate 80 is a binding site for Mg(2+). A Zn(2+)-binding site is contributed by cysteine 81. Mg(2+) is bound by residues aspartate 82 and aspartate 84. Cysteine 97 and cysteine 104 together coordinate Zn(2+).

Belongs to the PRA-CH family. As to quaternary structure, homodimer. The cofactor is Mg(2+). Zn(2+) is required as a cofactor.

Its subcellular location is the cytoplasm. The enzyme catalyses 1-(5-phospho-beta-D-ribosyl)-5'-AMP + H2O = 1-(5-phospho-beta-D-ribosyl)-5-[(5-phospho-beta-D-ribosylamino)methylideneamino]imidazole-4-carboxamide. It functions in the pathway amino-acid biosynthesis; L-histidine biosynthesis; L-histidine from 5-phospho-alpha-D-ribose 1-diphosphate: step 3/9. Catalyzes the hydrolysis of the adenine ring of phosphoribosyl-AMP. The sequence is that of Phosphoribosyl-AMP cyclohydrolase from Mycobacterium sp. (strain MCS).